We begin with the raw amino-acid sequence, 129 residues long: uncharacterized protein (129 aa).

The helical transmembrane segment at 77 to 97 (ILAVFIISFIIVVVGVLLLGL) threads the bilayer. The disordered stretch occupies residues 109–129 (SSNDKKLQSNDEEKQALAEKA). Residues 111-129 (NDKKLQSNDEEKQALAEKA) are compositionally biased toward basic and acidic residues.

The protein localises to the vacuole membrane. This is an uncharacterized protein from Saccharomyces cerevisiae (strain ATCC 204508 / S288c) (Baker's yeast).